Here is a 100-residue protein sequence, read N- to C-terminus: UPF0251 protein VV2_0946 (100 aa).

The protein belongs to the UPF0251 family.

This is UPF0251 protein VV2_0946 from Vibrio vulnificus (strain CMCP6).